A 387-amino-acid chain; its full sequence is EP300-interacting inhibitor of differentiation 3 (387 aa).

The span at 1–19 shows a compositional bias: basic and acidic residues; that stretch reads MSEEKCSLTGGEEKGEELA. The segment at 1-77 is disordered; the sequence is MSEEKCSLTG…SDDLSPEAPC (77 aa). Acidic residues predominate over residues 32–72; sequence EEDDDDDEEALKKEEEEEEEEEEEDEEEEEEGPDSSSDDLS.

Belongs to the NSE4 family. As to quaternary structure, component of the SMC5-SMC6 complex which consists at least of SMC5, SMC6, NSMCE2, NSMCE1, NSMCE4A or EID3 and NSMCE3. NSMCE1, NSMCE4A or EID3 and NSMCE3 probably form a subcomplex that bridges the head domains of the SMC5:SMC6 heterodimer. Homodimer, and heterodimer with EID2. Interacts with the C-terminal region of CREBBP.

The protein resides in the nucleus. It localises to the cytoplasm. Its subcellular location is the chromosome. It is found in the telomere. In terms of biological role, tissue-specific component of the SMC5-SMC6 complex, a complex involved in repair of DNA double-strand breaks by homologous recombination. The complex may promote sister chromatid homologous recombination by recruiting the SMC1-SMC3 cohesin complex to double-strand breaks. The complex is required for telomere maintenance via recombination and mediates sumoylation of shelterin complex (telosome) components. Its function is as follows. Acts as a repressor of nuclear receptor-dependent transcription possibly by interfering with CREBBP-dependent coactivation. May function as a coinhibitor of other CREBBP/EP300-dependent transcription factors. The sequence is that of EP300-interacting inhibitor of differentiation 3 from Rattus norvegicus (Rat).